We begin with the raw amino-acid sequence, 670 residues long: uncharacterized protein (670 aa).

Transmembrane regions (helical) follow at residues 23 to 42, 47 to 69, 76 to 98, 118 to 140, 153 to 170, 381 to 403, 410 to 432, 437 to 454, 461 to 483, and 493 to 510; these read YALR…YYLN, YWAM…SKSL, LLGA…FFLL, VAYA…VNIT, VCEV…MMIL, QWDA…SAVA, SLLM…GLMV, LWQF…MQLL, FAAL…NPPV, and NLAK…FAIL.

This sequence belongs to the aromatic acid exporter ArAE (TC 2.A.85) family.

It localises to the cell membrane. This is an uncharacterized protein from Escherichia coli O157:H7.